Reading from the N-terminus, the 388-residue chain is F-box protein At4g00893 (388 aa).

The interval 1-30 (MLPSPSVHMASPPPSLNMASHPPSPATASR) is disordered. Residues 42–88 (NPSFADLPSSLIEEIMLLLVLKDNIRASAACKSWYEAGVSVRVVDKH) enclose the F-box domain.

This chain is F-box protein At4g00893, found in Arabidopsis thaliana (Mouse-ear cress).